We begin with the raw amino-acid sequence, 206 residues long: ATP-dependent dethiobiotin synthetase BioD (206 aa).

ATP is bound at residue 12 to 17; it reads GVGKTI. Thr-16 provides a ligand contact to Mg(2+). Lys-32 is an active-site residue. Mg(2+) contacts are provided by His-46 and Glu-98. ATP is bound at residue 98-101; it reads EGAG.

Belongs to the dethiobiotin synthetase family. Homodimer. Mg(2+) is required as a cofactor.

Its subcellular location is the cytoplasm. It carries out the reaction (7R,8S)-7,8-diammoniononanoate + CO2 + ATP = (4R,5S)-dethiobiotin + ADP + phosphate + 3 H(+). It participates in cofactor biosynthesis; biotin biosynthesis; biotin from 7,8-diaminononanoate: step 1/2. In terms of biological role, catalyzes a mechanistically unusual reaction, the ATP-dependent insertion of CO2 between the N7 and N8 nitrogen atoms of 7,8-diaminopelargonic acid (DAPA, also called 7,8-diammoniononanoate) to form a ureido ring. This is ATP-dependent dethiobiotin synthetase BioD from Novosphingobium aromaticivorans (strain ATCC 700278 / DSM 12444 / CCUG 56034 / CIP 105152 / NBRC 16084 / F199).